We begin with the raw amino-acid sequence, 171 residues long: Transcription factor pcr1 (171 aa).

Positions 10-73 (DEKRRRILER…FRLKSQLLAH (64 aa)) constitute a bZIP domain. The interval 12-51 (KRRRILERNRIAASKFRQKKKEWIKELEQTANAAFEQSKR) is basic motif. The tract at residues 52–66 (LQLLLSQLQQEAFRL) is leucine-zipper. A disordered region spans residues 125-171 (QMHPSLQGLPPNQHPQMPPSSQQPNSDDVQQHMFSAAGLPRSLGGPI). The segment covering 143 to 152 (PSSQQPNSDD) has biased composition (low complexity).

This sequence belongs to the bZIP family. In terms of assembly, heterodimer of pcr1/mts2 and atf1/mts1.

It localises to the nucleus. Its function is as follows. Involved in regulation of gene expression for sexual development. Binds and activates CRE sites (cAMP-response elements, also known as M26 meiotic recombination hotspots). The chain is Transcription factor pcr1 (pcr1) from Schizosaccharomyces pombe (strain 972 / ATCC 24843) (Fission yeast).